Reading from the N-terminus, the 283-residue chain is uncharacterized protein (283 aa).

Residues 1-10 show a composition bias toward polar residues; sequence MEVNKTTESL. Disordered stretches follow at residues 1–96 and 255–283; these read MEVN…SGGN and DQEG…EAQI. Composition is skewed to basic and acidic residues over residues 14–34 and 44–81; these read KVEH…RDVK and SKQE…VSSR.

Belongs to the chlamydial CPn_0705/CT_671/TC_0042 family.

This is an uncharacterized protein from Chlamydia muridarum (strain MoPn / Nigg).